The following is a 423-amino-acid chain: Flavohemoprotein B (423 aa).

The region spanning 1 to 136 (MLSQKSIQII…VAQAFMDAEE (136 aa)) is the Globin domain. Heme b is bound at residue H83. Residues Y93 and E135 each act as charge relay system in the active site. Positions 149 to 423 (WKDTREFVVD…LRGVKNIIEN (275 aa)) are reductase. Residues 150-268 (KDTREFVVDR…SVPAGDFVVN (119 aa)) form the FAD-binding FR-type domain. FAD-binding positions include Y188 and 212–215 (RHYS). 281 to 286 (GVGINP) is an NADP(+) binding site. 400-403 (LFGP) provides a ligand contact to FAD.

Belongs to the globin family. Two-domain flavohemoproteins subfamily. This sequence in the C-terminal section; belongs to the flavoprotein pyridine nucleotide cytochrome reductase family. FAD serves as cofactor. It depends on heme b as a cofactor.

The protein resides in the cytoplasm. It carries out the reaction 2 nitric oxide + NADPH + 2 O2 = 2 nitrate + NADP(+) + H(+). The enzyme catalyses 2 nitric oxide + NADH + 2 O2 = 2 nitrate + NAD(+) + H(+). In terms of biological role, is involved in NO detoxification in an aerobic process, termed nitric oxide dioxygenase (NOD) reaction that utilizes O(2) and NAD(P)H to convert NO to nitrate, which protects the cell from various noxious nitrogen compounds. Therefore, plays a central role in the inducible response to nitrosative stress. In the presence of oxygen and NADH, it has NADH oxidase activity, which leads to the generation of superoxide and H(2)O(2). Under anaerobic conditions, it also exhibits nitric oxide reductase and FAD reductase activities. However, all these reactions are much lower than NOD activity. In Dictyostelium discoideum (Social amoeba), this protein is Flavohemoprotein B (fhbB).